We begin with the raw amino-acid sequence, 241 residues long: Ribosomal RNA small subunit methyltransferase G (241 aa).

S-adenosyl-L-methionine-binding positions include glycine 79, phenylalanine 84, 130 to 131 (AE), and arginine 150.

It belongs to the methyltransferase superfamily. RNA methyltransferase RsmG family.

It localises to the cytoplasm. Specifically methylates the N7 position of a guanine in 16S rRNA. The chain is Ribosomal RNA small subunit methyltransferase G from Ligilactobacillus salivarius (strain UCC118) (Lactobacillus salivarius).